The sequence spans 354 residues: Probable L-ascorbate-6-phosphate lactonase UlaG (354 aa).

This sequence belongs to the UlaG family. Requires a divalent metal cation as cofactor.

Its subcellular location is the cytoplasm. It catalyses the reaction L-ascorbate 6-phosphate + H2O = 3-dehydro-L-gulonate 6-phosphate. Its pathway is cofactor degradation; L-ascorbate degradation; D-xylulose 5-phosphate from L-ascorbate: step 1/4. Functionally, probably catalyzes the hydrolysis of L-ascorbate-6-P into 3-keto-L-gulonate-6-P. Is essential for L-ascorbate utilization under anaerobic conditions. The protein is Probable L-ascorbate-6-phosphate lactonase UlaG of Shigella dysenteriae serotype 1 (strain Sd197).